Consider the following 154-residue polypeptide: SsrA-binding protein (154 aa).

The interval 134–154 (DKREDIKKRDQERELSRRFKN) is disordered.

This sequence belongs to the SmpB family.

The protein localises to the cytoplasm. Required for rescue of stalled ribosomes mediated by trans-translation. Binds to transfer-messenger RNA (tmRNA), required for stable association of tmRNA with ribosomes. tmRNA and SmpB together mimic tRNA shape, replacing the anticodon stem-loop with SmpB. tmRNA is encoded by the ssrA gene; the 2 termini fold to resemble tRNA(Ala) and it encodes a 'tag peptide', a short internal open reading frame. During trans-translation Ala-aminoacylated tmRNA acts like a tRNA, entering the A-site of stalled ribosomes, displacing the stalled mRNA. The ribosome then switches to translate the ORF on the tmRNA; the nascent peptide is terminated with the 'tag peptide' encoded by the tmRNA and targeted for degradation. The ribosome is freed to recommence translation, which seems to be the essential function of trans-translation. This chain is SsrA-binding protein, found in Leuconostoc mesenteroides subsp. mesenteroides (strain ATCC 8293 / DSM 20343 / BCRC 11652 / CCM 1803 / JCM 6124 / NCDO 523 / NBRC 100496 / NCIMB 8023 / NCTC 12954 / NRRL B-1118 / 37Y).